The chain runs to 488 residues: GTPase Der (488 aa).

EngA-type G domains are found at residues 3 to 166 and 201 to 374; these read PVVA…VSDG and IKLA…QCAT. GTP-binding positions include 9–16, 56–60, 118–121, 207–214, 254–258, and 319–322; these read GRPNVGKS, DTGGI, NKTD, DTAGV, and NKWD. Residues 375–459 enclose the KH-like domain; that stretch reads KRVSTALLTR…PIRIQFNEGA (85 aa).

It belongs to the TRAFAC class TrmE-Era-EngA-EngB-Septin-like GTPase superfamily. EngA (Der) GTPase family. In terms of assembly, associates with the 50S ribosomal subunit.

Functionally, GTPase that plays an essential role in the late steps of ribosome biogenesis. In Sodalis glossinidius (strain morsitans), this protein is GTPase Der.